The chain runs to 339 residues: Phosphoribosylformylglycinamidine cyclo-ligase (339 aa).

The protein belongs to the AIR synthase family.

It localises to the cytoplasm. The enzyme catalyses 2-formamido-N(1)-(5-O-phospho-beta-D-ribosyl)acetamidine + ATP = 5-amino-1-(5-phospho-beta-D-ribosyl)imidazole + ADP + phosphate + H(+). It participates in purine metabolism; IMP biosynthesis via de novo pathway; 5-amino-1-(5-phospho-D-ribosyl)imidazole from N(2)-formyl-N(1)-(5-phospho-D-ribosyl)glycinamide: step 2/2. The sequence is that of Phosphoribosylformylglycinamidine cyclo-ligase from Streptococcus thermophilus (strain ATCC BAA-250 / LMG 18311).